The primary structure comprises 318 residues: Myoblast determination protein 1 (318 aa).

Met-1 participates in a covalent cross-link: Peptide (Met-Gly) (interchain with G-Cter in ubiquitin). Lys-104 bears the N6-methyllysine; by EHMT2 mark. The 52-residue stretch at 109–160 (DRRKAATMRERRRLSKVNEAFETLKRCTSSNPNQRLPKVEILRNAIRYIEGL) folds into the bHLH domain. Disordered stretches follow at residues 175–225 (AAFY…QNGY) and 265–318 (APAL…YQVL). The segment covering 196 to 206 (SDASSPRSNCS) has biased composition (polar residues). Residues 265-274 (APALLLADAP) are compositionally biased toward low complexity. 2 stretches are compositionally biased toward polar residues: residues 287–298 (LSDTEQGTQTPS) and 307–318 (AGSNPNAIYQVL).

In terms of assembly, interacts with SUV39H1. Efficient DNA binding requires dimerization with another bHLH protein. Seems to form active heterodimers with ITF-2. Interacts with DDX5. Interacts with CHD2. Interacts with TSC22D3 isoform 1 and isoform 4. Interacts with SETD3. Interacts with P-TEFB complex; promotes the transcriptional activity of MYOD1 through its CDK9-mediated phosphorylation. Interacts with CSRP3. Interacts with NUPR1. Acetylated by a complex containing EP300 and PCAF. The acetylation is essential to activate target genes. Conversely, its deacetylation by SIRT1 inhibits its function. In terms of processing, ubiquitinated on the N-terminus; which is required for proteasomal degradation. Post-translationally, phosphorylated by CDK9. This phosphorylation promotes its function in muscle differentiation. Methylation at Lys-104 by EHMT2/G9a inhibits myogenic activity.

The protein localises to the nucleus. In terms of biological role, acts as a transcriptional activator that promotes transcription of muscle-specific target genes and plays a role in muscle differentiation. Together with MYF5 and MYOG, co-occupies muscle-specific gene promoter core region during myogenesis. Induces fibroblasts to differentiate into myoblasts. Interacts with and is inhibited by the twist protein. This interaction probably involves the basic domains of both proteins. This chain is Myoblast determination protein 1 (Myod1), found in Mus musculus (Mouse).